A 474-amino-acid chain; its full sequence is UDP-N-acetylmuramate--L-alanine ligase (474 aa).

An ATP-binding site is contributed by 112-118; the sequence is GTHGKTT.

This sequence belongs to the MurCDEF family.

It is found in the cytoplasm. The catalysed reaction is UDP-N-acetyl-alpha-D-muramate + L-alanine + ATP = UDP-N-acetyl-alpha-D-muramoyl-L-alanine + ADP + phosphate + H(+). The protein operates within cell wall biogenesis; peptidoglycan biosynthesis. In terms of biological role, cell wall formation. The polypeptide is UDP-N-acetylmuramate--L-alanine ligase (Cupriavidus taiwanensis (strain DSM 17343 / BCRC 17206 / CCUG 44338 / CIP 107171 / LMG 19424 / R1) (Ralstonia taiwanensis (strain LMG 19424))).